The primary structure comprises 870 residues: Breast cancer anti-estrogen resistance protein 1 (870 aa).

Residue methionine 1 is modified to N-acetylmethionine. Residues 3 to 65 (HLNVLAKALY…PGNRLKILVG (63 aa)) form the SH3 domain. The interval 70-156 (KPAGPGPGPP…TFSKQTPHHP (87 aa)) is disordered. The span at 73 to 85 (GPGPGPPATPAQP) shows a compositional bias: pro residues. The segment covering 97–111 (SQYTPMLPNTYQPQP) has biased composition (polar residues). The segment at 115–416 (YLVPTPSKAQ…SGVYAVPPPA (302 aa)) is substrate for kinases. Residue tyrosine 128 is modified to Phosphotyrosine; by SRC. Phosphoserine occurs at positions 134 and 139. The segment covering 135–151 (PQFQSPPAKQTSTFSKQ) has biased composition (polar residues). Position 234 is a phosphotyrosine (tyrosine 234). Phosphotyrosine; by ABL1 is present on tyrosine 249. Position 269 is a phosphothreonine (threonine 269). A Phosphoserine modification is found at serine 292. Phosphotyrosine occurs at positions 362, 372, and 410. 3 disordered regions span residues 411–449 (AVPP…VAGP), 609–658 (KATA…NSEG), and 715–734 (IDHD…GRTG). Over residues 416 to 426 (AEREAPAEGKR) the composition is skewed to basic and acidic residues. Residues 427–444 (LSASSTGSTRSSQSASSL) are compositionally biased toward low complexity. 3 positions are modified to phosphoserine: serine 428, serine 437, and serine 639. Over residues 626 to 655 (TDKTSSIQSRPLPSPPKFTSQDSPDGQYEN) the composition is skewed to polar residues. The SH3-binding signature appears at 635–643 (RPLPSPPKF). The segment at 746–796 (FYLEQCEANLTTLTNAVDAFFTAVATNQPPKIFVAHSKFVILSAHKLVFIG) is divergent helix-loop-helix motif.

This sequence belongs to the CAS family. As to quaternary structure, forms complexes in vivo with PTK2/FAK1, adapter protein CRKL and LYN kinase. Heterodimerizes with NEDD9. Component of a complex comprised of SH2D3C, BCAR1/CAS, and CRK. Within the complex, interacts with SH2D3C (via C-terminus), and CRK. Part of a complex comprised of PTPRA, BCAR1, BCAR3 (via SH2 domain) and SRC; the formation of the complex is dependent on integrin mediated-tyrosine phosphorylation of PTPRA. Interacts with BCAR3 (via Ras-GEF domain); the interaction regulates adhesion-dependent serine phosphorylation. Interacts with SMAD2 and SMAD3. Interacts with NPHP1. Interacts with PTK2B/PYK2. Interacts (via C-terminus) with SH2D3C/CHAT isoform 2 (via C-terminus). Interacts with activated CSPG4. Interacts with BMX, INPPL1/SHIP2 and PEAK1. Part of a collagen-stimulated complex involved in cell migration made of CDC42, CRK, TNK2 and BCAR1/p130cas. Interacts with TNK2 via SH3 domains. Interacts (when tyrosine-phosphorylated) with tensin TNS1; the interaction is increased by phosphorylation of TNS1. Post-translationally, PTK2/FAK1 activation mediates phosphorylation at the YDYVHL motif; phosphorylation is most likely catalyzed by SRC family members. SRC-family kinases are recruited to the phosphorylated sites and can phosphorylate other tyrosine residues. Tyrosine phosphorylation is triggered by integrin-mediated adhesion of cells to the extracellular matrix. In terms of processing, dephosphorylated by PTPN14 at Tyr-128. Phosphorylated by SRC kinase in a EDN1- and PTK2B-mediated manner; phosphorylation strengthens its interaction with BCAR3 as part of the PTK2B/BCAR1/BCAR3/RAP1 signaling pathway. Expressed in B-cells (at protein level). Widely expressed with an abundant expression in the testis. Low level of expression seen in the liver, thymus, and peripheral blood leukocytes.

Its subcellular location is the cell junction. It localises to the focal adhesion. The protein localises to the cytoplasm. The protein resides in the cell projection. It is found in the axon. Functionally, docking protein which plays a central coordinating role for tyrosine kinase-based signaling related to cell adhesion. Implicated in induction of cell migration and cell branching. Involved in the BCAR3-mediated inhibition of TGFB signaling. This Homo sapiens (Human) protein is Breast cancer anti-estrogen resistance protein 1 (BCAR1).